Here is a 169-residue protein sequence, read N- to C-terminus: Small ribosomal subunit protein bS16 (169 aa).

Residues 114–169 form a disordered region; sequence AEGPTAEAITEKRRKAKEEAEAKAAAEAEAAEKAEAEAAEKAAAEAAEESEEASAE. Over residues 129–156 the composition is skewed to basic and acidic residues; the sequence is AKEEAEAKAAAEAEAAEKAEAEAAEKAA. Residues 159–169 show a composition bias toward acidic residues; that stretch reads AAEESEEASAE.

It belongs to the bacterial ribosomal protein bS16 family.

This is Small ribosomal subunit protein bS16 from Corynebacterium urealyticum (strain ATCC 43042 / DSM 7109).